The following is a 219-amino-acid chain: Probable GTP-binding protein EngB (219 aa).

One can recognise an EngB-type G domain in the interval 31 to 205 (VGVEIAFAGR…LSILNEWCHP (175 aa)). GTP-binding positions include 39–46 (GRSNAGKS), 66–70 (GRTQL), 84–87 (DLPG), 151–154 (TKSD), and 184–186 (FSS). Serine 46 and threonine 68 together coordinate Mg(2+).

It belongs to the TRAFAC class TrmE-Era-EngA-EngB-Septin-like GTPase superfamily. EngB GTPase family. It depends on Mg(2+) as a cofactor.

Its function is as follows. Necessary for normal cell division and for the maintenance of normal septation. This chain is Probable GTP-binding protein EngB, found in Shewanella denitrificans (strain OS217 / ATCC BAA-1090 / DSM 15013).